Here is a 35-residue protein sequence, read N- to C-terminus: Photosystem II reaction center protein T (35 aa).

The chain crosses the membrane as a helical span at residues 3-23 (ALVYTFLLVSTLGIIFFAIFF).

This sequence belongs to the PsbT family. As to quaternary structure, PSII is composed of 1 copy each of membrane proteins PsbA, PsbB, PsbC, PsbD, PsbE, PsbF, PsbH, PsbI, PsbJ, PsbK, PsbL, PsbM, PsbT, PsbY, PsbZ, Psb30/Ycf12, at least 3 peripheral proteins of the oxygen-evolving complex and a large number of cofactors. It forms dimeric complexes.

It is found in the plastid. The protein resides in the chloroplast thylakoid membrane. Functionally, found at the monomer-monomer interface of the photosystem II (PS II) dimer, plays a role in assembly and dimerization of PSII. PSII is a light-driven water plastoquinone oxidoreductase, using light energy to abstract electrons from H(2)O, generating a proton gradient subsequently used for ATP formation. The protein is Photosystem II reaction center protein T of Cycas revoluta (Sago palm).